The chain runs to 858 residues: MVNFTVDQIRAIMDKEANIRNMSVIAHVDHGKSTLTDSLVCKAGIIASARAGETRFTDTRKDEQERCITIKSTAISLFYELSENDLNFIKQSKDGSGFLINLIDSPGHVDFSSEVTAALRVTDGALVVVDCVSGVCVQTETVLRQAIAERIKPVLMMNKMDRALLELQLEPEELYQTFQRIVENVNVIISTYGEGESGPMGNIMIDPVLGTVGFGSGLHGWAFTLKQFAEMYVAKFAAKGEGQLGPAERAKKVEDMMKKLWGDRYFDPANGKFSKSANSPDGKKLPRTFCQLILDPIFKVFDPIMNFRKEETAKLIEKLDIKLDSEDKDKEGKPLLKAVMRRWLPAGDALLQMITIHLPSPVTAQKYRCELLYEGPPDDEAAMGIKSCDPKGPLMMYISKMVPTSDKGRFYAFGRVFSGVVSTGLKVRIMGPNYTPGKKEDLYLKPIQRTILMMGRYVEPIEDVPCGNIVGLVGVDQFLVKTGTITTFEHAHNMRVMKFSVSPVVRVAVEAKNPADLPKLVEGLKRLAKSDPMVQCIIEESGEHIIAGAGELHLEICLKDLEEDHACIPIKKSDPVVSYRETVSEESNVLCLSKSPNKHNRLYMKARPFPDGLAEDIDKGEVSARQELKARARYLAEKYEWDVAEARKIWCFGPDGTGPNILTDITKGVQYLNEIKDSVVAGFQWATKEGALCEENMRGVRFDVHDVTLHADAIHRGGGQIIPTARRCLYASVLTAQPRLMEPIYLVEIQCPEQVVGGIYGVLNRKRGHVFEESQVAGTPMFVVKAYLPVNESFGFTADLRSNTGGQAFPQCVFDHWQILPGDPFDNSSRGSQVVAETRKRKGLKEGIPALDNFLDKL.

In terms of domain architecture, tr-type G spans 17–362 (ANIRNMSVIA…MITIHLPSPV (346 aa)). 26–33 (AHVDHGKS) contributes to the GTP binding site. Residue T54 is modified to Phosphothreonine. At T57 the chain carries Phosphothreonine; by EEF2K. T59 carries the post-translational modification Phosphothreonine. K152 carries the N6-succinyllysine modification. GTP contacts are provided by residues 158–161 (NKMD) and 216–218 (SGL). An N6-acetyllysine modification is found at K235. K239 is modified (N6-acetyllysine; alternate). K239 is covalently cross-linked (Glycyl lysine isopeptide (Lys-Gly) (interchain with G-Cter in SUMO1); alternate). At Y265 the chain carries Phosphotyrosine; by CSK. K272 is subject to N6-acetyllysine; alternate. K272 carries the N6-succinyllysine; alternate modification. K275 carries the post-translational modification N6-acetyllysine. A Glycyl lysine isopeptide (Lys-Gly) (interchain with G-Cter in SUMO) cross-link involves residue K322. At S325 the chain carries Phosphoserine. Position 373 is a phosphotyrosine; by CSK (Y373). The residue at position 435 (T435) is a Phosphothreonine. An N6-acetyllysine mark is found at K439 and K445. S502 carries the post-translational modification Phosphoserine. K525 bears the N6,N6,N6-trimethyllysine; by EEF2KMT mark. K529 participates in a covalent cross-link: Glycyl lysine isopeptide (Lys-Gly) (interchain with G-Cter in SUMO). Residue K572 is modified to N6-succinyllysine. Residue S595 is modified to Phosphoserine; by CDK2. An N6-acetyllysine modification is found at K619. H715 is subject to (Microbial infection) ADP-ribosyldiphthamide. At H715 the chain carries Diphthamide.

This sequence belongs to the TRAFAC class translation factor GTPase superfamily. Classic translation factor GTPase family. EF-G/EF-2 subfamily. Binds to 80S ribosomes. Actively translating ribosomes show mutually exclusive binding of eIF5a (EIF5A or EIF5A2) and EEF2/eEF2. Interacts with SERBP1; interaction sequesters EEF2/eEF2 at the A-site of the ribosome, thereby blocking the interaction sites of the mRNA-tRNA complex, promoting ribosome stabilization and hibernation. Interacts with HABP4; interaction takes place at the A-site of hibernating ribosomes and promotes ribosome stabilization. Component of the mRNA surveillance SURF complex, at least composed of ERF1, ERF3 (ERF3A or ERF3B), EEF2, UPF1/RENT1, SMG1, SMG8 and SMG9. Interacts with RBPMS2. Post-translationally, phosphorylation by EF-2 kinase completely inactivates EF-2; it requires prior phosphorylation by CDK2 at Ser-595 during mitotic prometaphase. Phosphorylation by CSK promotes SUMOylation, proteolytic cleavage, and nuclear translocation if the C-terminal fragment. In terms of processing, diphthamide is 2-[3-carboxyamido-3-(trimethyl-ammonio)propyl]histidine. (Microbial infection) Diphthamide can be ADP-ribosylated by diphtheria toxin and by Pseudomonas exotoxin A, thus arresting protein synthesis. Post-translationally, ISGylated. In terms of processing, proteolytically processed at two sites following phosphorylation by CSK. SUMOylated following phosphorylation by CSK, promotes proteolytic cleavage.

It localises to the cytoplasm. The protein resides in the nucleus. The enzyme catalyses GTP + H2O = GDP + phosphate + H(+). Functionally, catalyzes the GTP-dependent ribosomal translocation step during translation elongation. During this step, the ribosome changes from the pre-translocational (PRE) to the post-translocational (POST) state as the newly formed A-site-bound peptidyl-tRNA and P-site-bound deacylated tRNA move to the P and E sites, respectively. Catalyzes the coordinated movement of the two tRNA molecules, the mRNA and conformational changes in the ribosome. This chain is Elongation factor 2 (EEF2), found in Cricetulus griseus (Chinese hamster).